Reading from the N-terminus, the 371-residue chain is DNA replication and repair protein RecF (371 aa).

30 to 37 contributes to the ATP binding site; that stretch reads GENAQGKT.

It belongs to the RecF family.

Its subcellular location is the cytoplasm. In terms of biological role, the RecF protein is involved in DNA metabolism; it is required for DNA replication and normal SOS inducibility. RecF binds preferentially to single-stranded, linear DNA. It also seems to bind ATP. In Staphylococcus epidermidis (strain ATCC 35984 / DSM 28319 / BCRC 17069 / CCUG 31568 / BM 3577 / RP62A), this protein is DNA replication and repair protein RecF.